Consider the following 164-residue polypeptide: FMN reductase (NADH) RutF (164 aa).

The protein belongs to the non-flavoprotein flavin reductase family. RutF subfamily.

It catalyses the reaction FMNH2 + NAD(+) = FMN + NADH + 2 H(+). Catalyzes the reduction of FMN to FMNH2 which is used to reduce pyrimidine by RutA via the Rut pathway. This chain is FMN reductase (NADH) RutF, found in Escherichia coli O150:H5 (strain SE15).